A 1516-amino-acid polypeptide reads, in one-letter code: UDP-glucose:glycoprotein glucosyltransferase 2 (1516 aa).

An N-terminal signal peptide occupies residues 1–27; that stretch reads MAPAKATNVVRLLLGSTALWLSQLGSG. Residues asparagine 256, asparagine 286, asparagine 920, and asparagine 950 are each glycosylated (N-linked (GlcNAc...) asparagine). Residues 1220–1516 form a glucosyltransferase region; the sequence is LHKENKKEKD…QDTILTHDEL (297 aa). Position 1289 is a phosphotyrosine (tyrosine 1289). Positions 1513-1516 match the Prevents secretion from ER motif; that stretch reads HDEL.

This sequence belongs to the glycosyltransferase 8 family. As to quaternary structure, interacts with METTL23. Interacts with SELENOF. Requires Ca(2+) as cofactor. It depends on Mn(2+) as a cofactor. As to expression, higher levels in kidney, pancreas, heart, and skeletal muscle.

It localises to the endoplasmic reticulum lumen. Its subcellular location is the endoplasmic reticulum-Golgi intermediate compartment. It carries out the reaction N(4)-(alpha-D-Man-(1-&gt;2)-alpha-D-Man-(1-&gt;2)-alpha-D-Man-(1-&gt;3)-[alpha-D-Man-(1-&gt;2)-alpha-D-Man-(1-&gt;3)-[alpha-D-Man-(1-&gt;2)-alpha-D-Man-(1-&gt;6)]-alpha-D-Man-(1-&gt;6)]-beta-D-Man-(1-&gt;4)-beta-D-GlcNAc-(1-&gt;4)-beta-D-GlcNAc)-L-asparaginyl-[protein] (N-glucan mannose isomer 9A1,2,3B1,2,3) + UDP-alpha-D-glucose = N(4)-(alpha-D-Glc-(1-&gt;3)-alpha-D-Man-(1-&gt;2)-alpha-D-Man-(1-&gt;2)-alpha-D-Man-(1-&gt;3)-[alpha-D-Man-(1-&gt;2)-alpha-D-Man-(1-&gt;3)-[alpha-D-Man-(1-&gt;2)-alpha-D-Man-(1-&gt;6)]-alpha-D-Man-(1-&gt;6)]-beta-D-Man-(1-&gt;4)-beta-D-GlcNAc-(1-&gt;4)-beta-D-GlcNAc)-L-asparaginyl-[protein] + UDP + H(+). It functions in the pathway protein modification; protein glycosylation. With respect to regulation, ethylenediaminetetraacetic acid completely abolishes catalytic activity. Catalytic activity is enhanced by complex formation with SELENOF. Functionally, recognizes glycoproteins with minor folding defects. Reglucosylates single N-glycans near the misfolded part of the protein, thus providing quality control for protein folding in the endoplasmic reticulum. Reglucosylated proteins are recognized by calreticulin for recycling to the endoplasmic reticulum and refolding or degradation. This Homo sapiens (Human) protein is UDP-glucose:glycoprotein glucosyltransferase 2 (UGGT2).